A 587-amino-acid chain; its full sequence is Formate--tetrahydrofolate ligase (587 aa).

73 to 80 (TPLGEGKS) is a binding site for ATP.

It belongs to the formate--tetrahydrofolate ligase family.

It catalyses the reaction (6S)-5,6,7,8-tetrahydrofolate + formate + ATP = (6R)-10-formyltetrahydrofolate + ADP + phosphate. Its pathway is one-carbon metabolism; tetrahydrofolate interconversion. This is Formate--tetrahydrofolate ligase from Syntrophobacter fumaroxidans (strain DSM 10017 / MPOB).